The sequence spans 468 residues: Proline--tRNA ligase (468 aa).

This sequence belongs to the class-II aminoacyl-tRNA synthetase family. ProS type 3 subfamily. In terms of assembly, homodimer.

The protein resides in the cytoplasm. The catalysed reaction is tRNA(Pro) + L-proline + ATP = L-prolyl-tRNA(Pro) + AMP + diphosphate. Functionally, catalyzes the attachment of proline to tRNA(Pro) in a two-step reaction: proline is first activated by ATP to form Pro-AMP and then transferred to the acceptor end of tRNA(Pro). The chain is Proline--tRNA ligase from Frankia alni (strain DSM 45986 / CECT 9034 / ACN14a).